We begin with the raw amino-acid sequence, 89 residues long: Small ribosomal subunit protein uS15 (89 aa).

This sequence belongs to the universal ribosomal protein uS15 family. In terms of assembly, part of the 30S ribosomal subunit. Forms a bridge to the 50S subunit in the 70S ribosome, contacting the 23S rRNA.

One of the primary rRNA binding proteins, it binds directly to 16S rRNA where it helps nucleate assembly of the platform of the 30S subunit by binding and bridging several RNA helices of the 16S rRNA. Functionally, forms an intersubunit bridge (bridge B4) with the 23S rRNA of the 50S subunit in the ribosome. The protein is Small ribosomal subunit protein uS15 of Nostoc punctiforme (strain ATCC 29133 / PCC 73102).